The chain runs to 753 residues: Bifunctional terpene synthase FUP1 (753 aa).

A terpene cyclase region spans residues M1–W329. D96 contacts Mg(2+). The DDXXD 1 signature appears at D96 to E100. Positions N231–E239 match the NSE/DTE motif. The interval K330 to S745 is prenyltransferase. Residues K461, R464, and H493 each contribute to the isopentenyl diphosphate site. Positions 500 and 504 each coordinate Mg(2+). Positions D500–D504 match the DDXXD 2 motif. R509 provides a ligand contact to dimethylallyl diphosphate. Residue R510 coordinates isopentenyl diphosphate. Dimethylallyl diphosphate-binding residues include K587, T588, Q625, N632, K640, and K650.

The protein in the N-terminal section; belongs to the terpene synthase family. In the C-terminal section; belongs to the FPP/GGPP synthase family. In terms of assembly, hexamer. Requires Mg(2+) as cofactor.

The enzyme catalyses isopentenyl diphosphate + (2E,6E)-farnesyl diphosphate = (2E,6E,10E)-geranylgeranyl diphosphate + diphosphate. It functions in the pathway secondary metabolite biosynthesis; terpenoid biosynthesis. Bifunctional terpene synthase; part of the gene cluster that mediates the biosynthesis of the mycotoxin fusaproliferin (FUP) that belongs to the class of bicyclic sesterterpenoids. The FUP biosynthetic pathway starts with the enzyme encoded by FUP1 that combines a C-terminal prenyltransferase domain responsible for the synthesis of geranylgeranyl diphosphate with the N-terminal terpene cyclase domain, to yield preterpestacin I. Preterpestacin I is then decorated by oxygenation steps that are catalyzed by two cytochrome P450 monooxygenases. First, FUP2 introduces a hydroxyl group at the C-24 position resulting in the formation of preterpestacin IIa, which can be further oxidized. The second P450 monooxygenase catalyzes the hydroxylation at C-16 and C-17 of preterpestacin IIa, producing preterpestacin III. Subsequently, the FAD-dependent oxidoreductase FUP4 catalyzes the oxidation of the hydroxy group at the C-16 position to a keto group, leading to the formation of (-)-terpestacin, which is the immediate precursor of FUP. The final step in the proposed biosynthetic pathway is the addition of an acetyl group at the C-24 position of terpestacin, which is catalyzed by the acetyltransferase FUP5. In Fusarium proliferatum (strain ET1) (Orchid endophyte fungus), this protein is Bifunctional terpene synthase FUP1.